The following is a 62-amino-acid chain: Cuticle protein 6.4 (62 aa).

Functionally, component of the cuticle of migratory locust which contains more than 100 different structural proteins. The polypeptide is Cuticle protein 6.4 (Locusta migratoria (Migratory locust)).